The chain runs to 387 residues: TPR repeat-containing protein SYNPCC7002_A0425 (387 aa).

9 TPR repeats span residues 63–96 (LNAL…EANN), 97–130 (ARIH…EDDN), 132–164 (EFFN…QPNN), 166–198 (AYSL…DSNN), 200–232 (MALQ…RPND), 233–266 (AELR…STRD), 267–300 (SAMQ…DPQS), 302–334 (EAFA…SPTD), and 336–368 (AAFY…YQQR).

The sequence is that of TPR repeat-containing protein SYNPCC7002_A0425 from Picosynechococcus sp. (strain ATCC 27264 / PCC 7002 / PR-6) (Agmenellum quadruplicatum).